A 629-amino-acid chain; its full sequence is Natural resistance-associated macrophage protein 2 homolog (629 aa).

Residues 1 to 151 (MNNNNNNKKL…KSKFSIKKLK (151 aa)) lie on the Cytoplasmic side of the membrane. Positions 50–119 (NVVNGSIEDS…SDIDSSGDSI (70 aa)) are disordered. A compositionally biased stretch (low complexity) spans 62–85 (QQQQQQQQQQQQQQQQQQQQQQQQ). Over residues 96–105 (DKPFQDRDSN) the composition is skewed to basic and acidic residues. Residues 106–118 (IGDGSDIDSSGDS) are compositionally biased toward low complexity. A helical transmembrane segment spans residues 152 to 172 (SFLGPALFISVGYMDPGNWAT). At 173-182 (DLEGGSRFGY) the chain is on the extracellular side. A helical transmembrane segment spans residues 183–203 (QLMWVLLFSNIMALFLQTLVI). Topologically, residues 204 to 224 (KLALVTKNDLAQQCRKEYSKT) are cytoplasmic. The chain crosses the membrane as a helical span at residues 225 to 245 (VNIFLWLILELAIISTDLAEV). Residues 246-253 (IGTAIGLN) lie on the Extracellular side of the membrane. A helical membrane pass occupies residues 254–274 (ILFGLPLIAGVAITSLDTLLF). At 275-286 (LAIQRWGIRKLE) the chain is on the cytoplasmic side. The helical transmembrane segment at 287–307 (LLILLLLSMITMCFVIELFLS) threads the bilayer. Over 308-326 (KPIASEVFSGFVPRLNSDS) the chain is Extracellular. A helical transmembrane segment spans residues 327 to 347 (VMVATGIVGATTMPHNLFLHG). Topologically, residues 348 to 376 (SVVKSRKIPNDRRKSVIKQAYRYNVIDTV) are cytoplasmic. A helical membrane pass occupies residues 377 to 397 (LALNCAFFVNIAILMLAASVF). The Extracellular segment spans residues 398-421 (WKSNIQVTELSEAYRLLTKLMDGK). A helical membrane pass occupies residues 422-442 (LAAVLFGLGLFLAGQSSTITG). Residues 443 to 468 (TMAGQIVMEGFIKLRIKPWLRRFITR) lie on the Cytoplasmic side of the membrane. The chain crosses the membrane as a helical span at residues 469 to 489 (LLAIIPAAIVIIVLGDKGTYT). The Extracellular portion of the chain corresponds to 490 to 491 (LL). The chain crosses the membrane as a helical span at residues 492–512 (IISQVLLSIGLPFAVVPLIIF). At 513–527 (TSSYEIMGEFKNRLS) the chain is on the cytoplasmic side. Residues 528-548 (IIIINSIIALFIIGLNLATIF) traverse the membrane as a helical segment. At 549 to 565 (QLINDFLHNDSIISKCL) the chain is on the extracellular side. N-linked (GlcNAc...) asparagine glycosylation occurs at Asn-557. A helical transmembrane segment spans residues 566 to 586 (TIIFLIPLSIALCCLLLWLII). At 587-629 (SKINFFTNLLSKIFNNNNNNNNKNIINNNNNYSGNTINNQTIQ) the chain is on the cytoplasmic side.

The protein belongs to the NRAMP family.

The protein resides in the cell membrane. Divalent transition metal (iron and manganese) transporter. This chain is Natural resistance-associated macrophage protein 2 homolog (nramp2), found in Dictyostelium discoideum (Social amoeba).